The sequence spans 285 residues: Tropomyosin alpha-3 chain (285 aa).

The stretch at 1-285 (MMEAIKKKMQ…DHALNDMTSI (285 aa)) forms a coiled coil. Methionine 2 is subject to N-acetylmethionine. N-acetylalanine is present on methionine 2. The segment covering 16–41 (KENALDRAEQAEAEQKQAEERSKQLE) has biased composition (basic and acidic residues). Residues 16-44 (KENALDRAEQAEAEQKQAEERSKQLEDEL) are disordered. Phosphothreonine is present on threonine 54. Serine 62 and serine 88 each carry phosphoserine. Threonine 109 bears the Phosphothreonine mark. N6-acetyllysine is present on residues glutamate 125 and leucine 177. Serine 207 is subject to Phosphoserine. Tyrosine 215 is subject to N6-acetyllysine. Serine 216 carries the phosphoserine modification. Phosphothreonine is present on threonine 253. Residue tyrosine 262 is modified to Phosphotyrosine. The residue at position 272 (serine 272) is a Phosphoserine. Threonine 283 bears the Phosphothreonine mark. Serine 284 carries the phosphoserine modification.

This sequence belongs to the tropomyosin family. Homodimer. Heterodimer of an alpha (TPM1, TPM3 or TPM4) and a beta (TPM2) chain. Interacts with TMOD1. Interacts with TNNT1.

The protein localises to the cytoplasm. It localises to the cytoskeleton. Functionally, binds to actin filaments in muscle and non-muscle cells. Plays a central role, in association with the troponin complex, in the calcium dependent regulation of vertebrate striated muscle contraction. Smooth muscle contraction is regulated by interaction with caldesmon. In non-muscle cells is implicated in stabilizing cytoskeleton actin filaments. The sequence is that of Tropomyosin alpha-3 chain (TPM3) from Homo sapiens (Human).